We begin with the raw amino-acid sequence, 227 residues long: CDP-diacylglycerol--glycerol-3-phosphate 3-phosphatidyltransferase (227 aa).

Transmembrane regions (helical) follow at residues 30–50 (IFIA…GSVA), 58–78 (VTIH…TAVI), 112–132 (VLIA…VIVL), 159–179 (WKTT…SFSL), and 192–212 (WAIV…SFGI).

The protein belongs to the CDP-alcohol phosphatidyltransferase class-I family.

The protein localises to the cell membrane. It catalyses the reaction a CDP-1,2-diacyl-sn-glycerol + sn-glycerol 3-phosphate = a 1,2-diacyl-sn-glycero-3-phospho-(1'-sn-glycero-3'-phosphate) + CMP + H(+). The protein operates within phospholipid metabolism; phosphatidylglycerol biosynthesis; phosphatidylglycerol from CDP-diacylglycerol: step 1/2. Its function is as follows. This protein catalyzes the committed step to the synthesis of the acidic phospholipids. This Mycoplasma pneumoniae (strain ATCC 29342 / M129 / Subtype 1) (Mycoplasmoides pneumoniae) protein is CDP-diacylglycerol--glycerol-3-phosphate 3-phosphatidyltransferase (pgsA).